A 62-amino-acid chain; its full sequence is Statherin (62 aa).

The signal sequence occupies residues 1–19 (MKFLVFAFILALMVSMIGA). A hydroxyapatite-binding; inhibits crystal growth region spans residues 20 to 25 (DSSEEK). Phosphoserine occurs at positions 21 and 22. A cross-link (isoglutamyl lysine isopeptide (Lys-Gln); in form cyclo-statherin Q-37) is located at residues 25-56 (KFLRRIGRFGYGYGPYQPVPEQPLYPQPYQPQ). The isoglutamyl lysine isopeptide (Lys-Gln); in form cyclo-statherin Q-39 cross-link spans 25 to 58 (KFLRRIGRFGYGYGPYQPVPEQPLYPQPYQPQYQ). The hydrophobic; inhibits precipitation of calcium phosphate salts stretch occupies residues 38–62 (GPYQPVPEQPLYPQPYQPQYQQYTF).

This sequence belongs to the histatin/statherin family. Substrate for transglutaminase-2. More than 95% of the cyclized peptide is cyclo-statherin Q-37, and less than 5% is cyclo-statherin Q-39. Cyclized forms account for about 1% of total statherin in saliva. Post-translationally, sulfated on tyrosine residues. In terms of tissue distribution, secreted by parotid and submandibular glands.

It localises to the secreted. Functionally, salivary protein that stabilizes saliva supersaturated with calcium salts by inhibiting the precipitation of calcium phosphate salts. It also modulates hydroxyapatite crystal formation on the tooth surface. This is Statherin (STATH) from Homo sapiens (Human).